A 125-amino-acid chain; its full sequence is Holo-[acyl-carrier-protein] synthase (125 aa).

2 residues coordinate Mg(2+): Asp-8 and Glu-57.

The protein belongs to the P-Pant transferase superfamily. AcpS family. Requires Mg(2+) as cofactor.

It is found in the cytoplasm. The enzyme catalyses apo-[ACP] + CoA = holo-[ACP] + adenosine 3',5'-bisphosphate + H(+). Transfers the 4'-phosphopantetheine moiety from coenzyme A to a Ser of acyl-carrier-protein. The polypeptide is Holo-[acyl-carrier-protein] synthase (Blochmanniella floridana).